The following is an 84-amino-acid chain: Three-finger toxin MALT0070C (84 aa).

The first 21 residues, Met-1–Thr-21, serve as a signal peptide directing secretion. Disulfide bonds link Cys-24–Cys-43, Cys-36–Cys-60, Cys-64–Cys-71, and Cys-72–Cys-77.

Belongs to the three-finger toxin family. Short-chain subfamily. In terms of tissue distribution, expressed by the venom gland.

It is found in the secreted. The chain is Three-finger toxin MALT0070C from Micrurus altirostris (Uruguayan coral snake).